The sequence spans 172 residues: Adenine phosphoribosyltransferase (172 aa).

The protein belongs to the purine/pyrimidine phosphoribosyltransferase family. Homodimer.

The protein resides in the cytoplasm. The enzyme catalyses AMP + diphosphate = 5-phospho-alpha-D-ribose 1-diphosphate + adenine. It participates in purine metabolism; AMP biosynthesis via salvage pathway; AMP from adenine: step 1/1. In terms of biological role, catalyzes a salvage reaction resulting in the formation of AMP, that is energically less costly than de novo synthesis. This is Adenine phosphoribosyltransferase from Parasynechococcus marenigrum (strain WH8102).